A 382-amino-acid chain; its full sequence is Protein RecA (382 aa).

Positions 1–20 (MPADVKAAQSSAGDSRPGER) are disordered. ATP is bound at residue 79 to 86 (GPESSGKT). Low complexity predominate over residues 360–369 (SAAAKPSAKT). The tract at residues 360-382 (SAAAKPSAKTADTDKKLVADGAA) is disordered. Positions 370-382 (ADTDKKLVADGAA) are enriched in basic and acidic residues.

This sequence belongs to the RecA family.

The protein localises to the cytoplasm. Its function is as follows. Can catalyze the hydrolysis of ATP in the presence of single-stranded DNA, the ATP-dependent uptake of single-stranded DNA by duplex DNA, and the ATP-dependent hybridization of homologous single-stranded DNAs. It interacts with LexA causing its activation and leading to its autocatalytic cleavage. The chain is Protein RecA from Synechococcus sp. (strain CC9311).